The primary structure comprises 156 residues: Transcriptional repressor NrdR (156 aa).

A zinc finger lies at 3-34; sequence CPKCNSTQSKVVDSRHADELNAIRRRRECENC. The ATP-cone domain occupies 49 to 139; sequence LIVVKKDGTR…VYKEFKDVDQ (91 aa).

This sequence belongs to the NrdR family. Requires Zn(2+) as cofactor.

Functionally, negatively regulates transcription of bacterial ribonucleotide reductase nrd genes and operons by binding to NrdR-boxes. This Staphylococcus aureus (strain NCTC 8325 / PS 47) protein is Transcriptional repressor NrdR.